The chain runs to 335 residues: Ubiquinone biosynthesis protein COQ4, mitochondrial (335 aa).

A mitochondrion-targeting transit peptide spans 1–10; sequence MLRLSLLRST. Residues His-210, Asp-211, His-214, and Glu-226 each contribute to the Zn(2+) site.

It belongs to the COQ4 family. Component of a multi-subunit COQ enzyme complex, composed of at least COQ3, COQ4, COQ5, COQ6, COQ7 and COQ9. Interacts with COQ3. Zn(2+) serves as cofactor.

It is found in the mitochondrion inner membrane. It catalyses the reaction 4-hydroxy-3-methoxy-5-(all-trans-hexaprenyl)benzoate + H(+) = 2-methoxy-6-(all-trans-hexaprenyl)phenol + CO2. The protein operates within cofactor biosynthesis; ubiquinone biosynthesis. Its function is as follows. Lyase that catalyzes the C1-decarboxylation of 4-hydroxy-3-methoxy-5-(all-trans-hexaprenyl)benzoic acid into 2-methoxy-6-(all-trans-hexaprenyl)phenol during ubiquinone biosynthesis. The sequence is that of Ubiquinone biosynthesis protein COQ4, mitochondrial from Saccharomyces cerevisiae (strain AWRI1631) (Baker's yeast).